A 239-amino-acid polypeptide reads, in one-letter code: 6-phosphogluconolactonase (239 aa).

The protein belongs to the glucosamine/galactosamine-6-phosphate isomerase family. 6-phosphogluconolactonase subfamily.

The enzyme catalyses 6-phospho-D-glucono-1,5-lactone + H2O = 6-phospho-D-gluconate + H(+). It functions in the pathway carbohydrate degradation; pentose phosphate pathway; D-ribulose 5-phosphate from D-glucose 6-phosphate (oxidative stage): step 2/3. Its function is as follows. Hydrolysis of 6-phosphogluconolactone to 6-phosphogluconate. The chain is 6-phosphogluconolactonase (pgl) from Xylella fastidiosa (strain 9a5c).